We begin with the raw amino-acid sequence, 311 residues long: p-hydroxybenzoic acid efflux pump subunit AaeA (311 aa).

The chain crosses the membrane as a helical span at residues 11 to 31 (VGITVLVVVLAVIAIFNVWAF).

It belongs to the membrane fusion protein (MFP) (TC 8.A.1) family.

It localises to the cell inner membrane. Forms an efflux pump with AaeB. The chain is p-hydroxybenzoic acid efflux pump subunit AaeA from Yersinia pseudotuberculosis serotype O:1b (strain IP 31758).